The primary structure comprises 361 residues: Tetrathionate reductase subunit C (361 aa).

A run of 9 helical transmembrane segments spans residues 26-46, 53-73, 104-124, 160-180, 193-213, 233-253, 258-278, 288-308, and 334-354; these read FSYALLISGADLLLLAALALL, AIPMFLILGLSFFSVILLGPL, ALYGGLLWPLTFIVALIFALL, LAAILVPLSALWTIYPGMLFF, LMLPMFFGETFITATGTALIL, GAAAIALAGVLILQMFIWGMW, FAAVVPMMQAAAVIFLLTFIL, ITPIVPVLALFGVVVNKWNLI, and AVSPIALAILLLVILSYIFPM.

The protein belongs to the NrfD family. Probably composed of three subunits: TtrA, TtrB and TtrC.

The protein localises to the cell membrane. Part of a membrane-bound tetrathionate reductase that catalyzes the reduction of tetrathionate to thiosulfate. TtrC probably anchors TtrA and TtrB to the external face of the cytoplasmic membrane. May transfer electrons from membrane quinol to TtrB. The sequence is that of Tetrathionate reductase subunit C (ttrC) from Archaeoglobus fulgidus (strain ATCC 49558 / DSM 4304 / JCM 9628 / NBRC 100126 / VC-16).